Consider the following 181-residue polypeptide: TATA-box-binding protein (181 aa).

Repeat copies occupy residues 7–83 (VVNV…VKEL) and 98–173 (VQNM…SKTL).

Belongs to the TBP family.

Functionally, general factor that plays a role in the activation of archaeal genes transcribed by RNA polymerase. Binds specifically to the TATA box promoter element which lies close to the position of transcription initiation. The polypeptide is TATA-box-binding protein (Methanococcus maripaludis (strain DSM 14266 / JCM 13030 / NBRC 101832 / S2 / LL)).